The sequence spans 385 residues: Initiation-specific alpha-1,6-mannosyltransferase (385 aa).

The Cytoplasmic segment spans residues methionine 1–lysine 15. The chain crosses the membrane as a helical; Signal-anchor for type II membrane protein span at residues leucine 16 to serine 36. The Lumenal segment spans residues proline 37–glutamine 385. The DXD motif motif lies at aspartate 189–aspartate 191.

This sequence belongs to the glycosyltransferase 32 family. Mn(2+) serves as cofactor.

The protein localises to the endoplasmic reticulum membrane. It is found in the golgi apparatus membrane. The catalysed reaction is Transfers an alpha-D-mannosyl residue from GDP-mannose into lipid-linked oligosaccharide, forming an alpha-(1-&gt;6)-D-mannosyl-D-mannose linkage.. Functionally, mannosyltransferase involved in outer chain elongation of asparagine-linked oligosaccharides of the type Man(9)GlcNAc(2). Adds the first alpha-1,6-mannose to the Man(8)GlcNAc(2) and Man(9)GlcNAc(2), but not Man(5)GlcNAc(2), endoplasmic reticulum intermediates. Represents the first enzymatic event required for synthesis of outer chain mannose linkages on yeast secretory proteins. N-glycan outer chain epitopes play a crucial role in the host-fungal interaction, virulence, and host immune response such as interleukin synthesis or phagocytosis by neutrophils. The protein is Initiation-specific alpha-1,6-mannosyltransferase of Candida albicans (strain SC5314 / ATCC MYA-2876) (Yeast).